The following is an 80-amino-acid chain: GDVCQDCIQMVTDLQNAVRTNSTFVEALVNHAKEECDRLGPGMADMCKNYISQYSEIAIQMMMHMQPKDICGLVGFCEEV.

The 80-residue stretch at 1-80 (GDVCQDCIQM…CGLVGFCEEV (80 aa)) folds into the Saposin B-type domain. 3 cysteine pairs are disulfide-bonded: cysteine 4–cysteine 77, cysteine 7–cysteine 71, and cysteine 36–cysteine 47. A glycan (N-linked (GlcNAc...) (complex) asparagine) is linked at asparagine 21.

In terms of assembly, saposin-B is a homodimer. Interacts with GRN; facilitates lysosomal delivery of progranulin from the extracellular space and the biosynthetic pathway. The one residue extended Saposin-B-Val is only found in a minority of the chains.

Its function is as follows. Saposin-B stimulates the hydrolysis of galacto-cerebroside sulfate by arylsulfatase A (EC 3.1.6.8), GM1 gangliosides by beta-galactosidase (EC 3.2.1.23) and globotriaosylceramide by alpha-galactosidase A (EC 3.2.1.22). Saposin-B forms a solubilizing complex with the substrates of the sphingolipid hydrolases. The chain is Saposin-B-Val (PSAP) from Sus scrofa (Pig).